Here is a 383-residue protein sequence, read N- to C-terminus: MTTLKTSSFSSLPWDLVEDILARVPATSLKRLRSTCKQWNFLFNDQIFTKMHFDKAEKQFLVLILRLYTVCSMSLDLRGLHDNIDPSIEVKGELSLIDPHCSSRKTFVSKVFHCNGLLLCTTMTGLVVWNPCTDQTRWIKTEVPHNRNDKYALGYGNYKSCYNYKIMKFLDLESFDLEIYEVNSNSWRVLGTVTPDFTIPLDAEGVSLRGNSYWIASHKREEIEEEEEEENEYFINDFLISFDFTTERFGPRVSLPFKCESSWDTISLSCVREERLSLFFQDDGTLKMEIWMTNNITETKTTTMSWSPFLKIDLYTYGHRFGNEVSFLVDEENKVIVCCDEEEDDINDTVYIIGENEYWRKEDIVQRSYRPRMFSYVPSLVQI.

The region spanning 6–51 (TSSFSSLPWDLVEDILARVPATSLKRLRSTCKQWNFLFNDQIFTKM) is the F-box domain. Kelch repeat units lie at residues 110–158 (KVFH…YGNY), 160–211 (SCYN…LRGN), and 349–383 (TVYIIGENEYWRKEDIVQRSYRPRMFSYVPSLVQI).

The chain is Putative F-box/kelch-repeat protein At1g62270 from Arabidopsis thaliana (Mouse-ear cress).